Consider the following 70-residue polypeptide: MILYPSIVDLMEKVDSKYTLCSLVAKRARQLIAGDTKLVDIDSDKPVTIATEEVNNGLITYQRPKKYGIK.

Belongs to the RNA polymerase subunit omega family. The RNAP catalytic core consists of 2 alpha, 1 beta, 1 beta' and 1 omega subunit. When a sigma factor is associated with the core the holoenzyme is formed, which can initiate transcription.

The enzyme catalyses RNA(n) + a ribonucleoside 5'-triphosphate = RNA(n+1) + diphosphate. Functionally, promotes RNA polymerase assembly. Latches the N- and C-terminal regions of the beta' subunit thereby facilitating its interaction with the beta and alpha subunits. In Thermoanaerobacter pseudethanolicus (strain ATCC 33223 / 39E) (Clostridium thermohydrosulfuricum), this protein is DNA-directed RNA polymerase subunit omega.